Here is a 244-residue protein sequence, read N- to C-terminus: Transcription factor Sox-12 (244 aa).

The interval 1–22 is disordered; the sequence is MVQNKTTGSCPKPTEVAPGGPS. A DNA-binding region (HMG box) is located at residues 31-99; that stretch reads IKRPMNAFMV…KHMADYPNYK (69 aa). Disordered regions lie at residues 101 to 137 and 152 to 193; these read RPRR…QMDT and GDQV…HEGL. Polar residues-rich tracts occupy residues 120–137 and 176–186; these read STAT…QMDT and HTKTVPSSPQS.

In terms of tissue distribution, expressed at a low level in embryos, and in the adult lung, ovary, skeletal muscle, testis, brain and heart.

The protein resides in the nucleus. Its function is as follows. Transcription factor that binds to the sequence 5'-AACAAT-3'. Acts as a transcriptional activator. The protein is Transcription factor Sox-12 (sox12) of Xenopus laevis (African clawed frog).